The chain runs to 135 residues: Antennal-specific protein OS-C (135 aa).

The first 27 residues, Met-1–Ala-27, serve as a signal peptide directing secretion. The disordered stretch occupies residues Val-43–Ala-84. Over residues Asp-49–Glu-67 the composition is skewed to acidic residues.

Antenna. In the third antennal segment. Expressed in sencilla coeloconica.

This chain is Antennal-specific protein OS-C (Os-C), found in Drosophila melanogaster (Fruit fly).